Consider the following 126-residue polypeptide: Small ribosomal subunit protein uS12m (126 aa).

Disordered stretches follow at residues 1–27 (MPTMNQLVRKGRESKRRTKRTRALNKC) and 106–126 (GIPGRRRGRSKYGTKKPKDYI). 2 stretches are compositionally biased toward basic residues: residues 12-23 (RESKRRTKRTRA) and 109-120 (GRRRGRSKYGTK).

This sequence belongs to the universal ribosomal protein uS12 family.

It is found in the mitochondrion. Protein S12 is involved in the translation initiation step. In Marchantia polymorpha (Common liverwort), this protein is Small ribosomal subunit protein uS12m (RPS12).